Here is a 575-residue protein sequence, read N- to C-terminus: Dihydroxy-acid dehydratase (575 aa).

Residues 1–25 (MPTTDSARAADIKQPDIKPRSRDVT) form a disordered region. Basic and acidic residues predominate over residues 8-25 (RAADIKQPDIKPRSRDVT). Cys64 provides a ligand contact to [2Fe-2S] cluster. Asp96 contributes to the Mg(2+) binding site. Cys137 is a binding site for [2Fe-2S] cluster. Asp138 and Lys139 together coordinate Mg(2+). An N6-carboxylysine modification is found at Lys139. Cys214 provides a ligand contact to [2Fe-2S] cluster. Position 465 (Glu465) interacts with Mg(2+). The Proton acceptor role is filled by Ser491.

It belongs to the IlvD/Edd family. As to quaternary structure, homodimer. [2Fe-2S] cluster serves as cofactor. The cofactor is Mg(2+).

The enzyme catalyses (2R)-2,3-dihydroxy-3-methylbutanoate = 3-methyl-2-oxobutanoate + H2O. It catalyses the reaction (2R,3R)-2,3-dihydroxy-3-methylpentanoate = (S)-3-methyl-2-oxopentanoate + H2O. Its pathway is amino-acid biosynthesis; L-isoleucine biosynthesis; L-isoleucine from 2-oxobutanoate: step 3/4. It participates in amino-acid biosynthesis; L-valine biosynthesis; L-valine from pyruvate: step 3/4. In terms of biological role, functions in the biosynthesis of branched-chain amino acids. Catalyzes the dehydration of (2R,3R)-2,3-dihydroxy-3-methylpentanoate (2,3-dihydroxy-3-methylvalerate) into 2-oxo-3-methylpentanoate (2-oxo-3-methylvalerate) and of (2R)-2,3-dihydroxy-3-methylbutanoate (2,3-dihydroxyisovalerate) into 2-oxo-3-methylbutanoate (2-oxoisovalerate), the penultimate precursor to L-isoleucine and L-valine, respectively. The chain is Dihydroxy-acid dehydratase from Mycobacterium avium (strain 104).